The chain runs to 234 residues: Thrombin-like enzyme acutin (234 aa).

Residue methionine 1 is a propeptide. The 224-residue stretch at valine 2–alanine 225 folds into the Peptidase S1 domain. Cystine bridges form between cysteine 8/cysteine 140, cysteine 27/cysteine 43, cysteine 75/cysteine 232, cysteine 119/cysteine 186, cysteine 151/cysteine 165, and cysteine 176/cysteine 201. Asparagine 21 carries an N-linked (GlcNAc...) asparagine glycan. Catalysis depends on charge relay system residues histidine 42 and aspartate 87. Serine 180 functions as the Charge relay system in the catalytic mechanism.

Belongs to the peptidase S1 family. Snake venom subfamily. Monomer. In terms of tissue distribution, expressed by the venom gland.

Its subcellular location is the secreted. Its function is as follows. Thrombin-like snake venom serine protease. Has arginyl esterase and fibrinogen clotting activities. In Deinagkistrodon acutus (Hundred-pace snake), this protein is Thrombin-like enzyme acutin.